Consider the following 364-residue polypeptide: Poly(3-hydroxyalkanoate) polymerase subunit PhaE (364 aa).

The segment at 322–364 (SGKTPTTALKAPAPATKATEKPATRATTRRKTAAKPTGGTADD) is disordered. Positions 324 to 338 (KTPTTALKAPAPATK) are enriched in low complexity.

This sequence belongs to the PHA/PHB synthase family. Type III PhaE subfamily. As to quaternary structure, forms a heterodimer with PhaC, which may multimerize in the presence of 3-hydroxybutyryl-CoA.

It localises to the cytoplasm. It functions in the pathway biopolymer metabolism; poly-(R)-3-hydroxybutanoate biosynthesis. Polymerizes D(-)-3-hydroxybutyryl-CoA to create polyhydroxybutyrate (PHB) which consists of thousands of hydroxybutyrate molecules linked end to end. This subunit has no catalytic activity but enhances the activity of PhaC, the catalytic subunit. The chain is Poly(3-hydroxyalkanoate) polymerase subunit PhaE from Thiocystis violacea.